The chain runs to 123 residues: Putative acidic leucine-rich nuclear phosphoprotein 32 family member C (123 aa).

4 LRR repeats span residues Glu43–Asn64, Lys65–Cys87, Asn89–Lys110, and Asn114–Cys123.

This sequence belongs to the ANP32 family.

The chain is Putative acidic leucine-rich nuclear phosphoprotein 32 family member C (Anp32c) from Mus musculus (Mouse).